The primary structure comprises 1059 residues: DNA-directed RNA polymerase subunit beta (1059 aa).

This sequence belongs to the RNA polymerase beta chain family. In terms of assembly, in plastids the minimal PEP RNA polymerase catalytic core is composed of four subunits: alpha, beta, beta', and beta''. When a (nuclear-encoded) sigma factor is associated with the core the holoenzyme is formed, which can initiate transcription (Potential).

Its subcellular location is the plastid. The protein resides in the apicoplast. It carries out the reaction RNA(n) + a ribonucleoside 5'-triphosphate = RNA(n+1) + diphosphate. Its function is as follows. DNA-dependent RNA polymerase catalyzes the transcription of DNA into RNA using the four ribonucleoside triphosphates as substrates. This Eimeria tenella (Coccidian parasite) protein is DNA-directed RNA polymerase subunit beta (rpoB).